The following is a 297-amino-acid chain: Protoheme IX farnesyltransferase 1 (297 aa).

Transmembrane regions (helical) follow at residues 23–43 (VVVLMLITSLAGMFLATRAGV), 45–65 (WSVLLFGNLGIGLCAGGAAVV), 93–113 (LPALLFALALALLGMVLLLVF), 117–137 (LTAWLTLASLLGYAVLYTGFL), 145–165 (IVIGGLAGAAPPLLGWVAVSG), 171–191 (PLLLVLIIFAWTPPHFWALAI), 216–236 (LHILLYTLILLAVSLLPYAIH), 241–261 (LYLVCALALGLRFLQWAWVLY), and 277–297 (IGYLFALFIALLLDHYLLLNL).

This sequence belongs to the UbiA prenyltransferase family. Protoheme IX farnesyltransferase subfamily.

It localises to the cell inner membrane. The catalysed reaction is heme b + (2E,6E)-farnesyl diphosphate + H2O = Fe(II)-heme o + diphosphate. It functions in the pathway porphyrin-containing compound metabolism; heme O biosynthesis; heme O from protoheme: step 1/1. In terms of biological role, converts heme B (protoheme IX) to heme O by substitution of the vinyl group on carbon 2 of heme B porphyrin ring with a hydroxyethyl farnesyl side group. This chain is Protoheme IX farnesyltransferase 1, found in Pseudomonas putida (strain ATCC 47054 / DSM 6125 / CFBP 8728 / NCIMB 11950 / KT2440).